Reading from the N-terminus, the 726-residue chain is Putative RNA polymerase II subunit B1 CTD phosphatase RPAP2 homolog (726 aa).

The RTR1-type zinc finger occupies 43-131; sequence AAASLLSGPD…LPPDRPFGVS (89 aa). 4 residues coordinate Zn(2+): cysteine 66, cysteine 71, cysteine 107, and cysteine 111. The span at 209-218 shows a compositional bias: basic and acidic residues; sequence VGGPKKEAKQ. 2 disordered regions span residues 209 to 242 and 294 to 323; these read VGGP…SGES and KKDK…GRDG. The span at 220 to 241 shows a compositional bias: polar residues; it reads DACSAEQSSNINVDSRNASSGE.

It belongs to the RPAP2 family.

The protein localises to the nucleus. It carries out the reaction O-phospho-L-seryl-[protein] + H2O = L-seryl-[protein] + phosphate. The enzyme catalyses O-phospho-L-threonyl-[protein] + H2O = L-threonyl-[protein] + phosphate. Putative RNA polymerase II subunit B1 C-terminal domain (CTD) phosphatase involved in RNA polymerase II transcription regulation. In Oryza sativa subsp. japonica (Rice), this protein is Putative RNA polymerase II subunit B1 CTD phosphatase RPAP2 homolog.